Here is a 150-residue protein sequence, read N- to C-terminus: MSRYAKILLLNGPNLNMLGKREPTHYGNLSLEDIEQRMQELAQQHQLELSCFQANSEEKLIDKIHQSFHLIDFIIINPAAYTHTSVALRDALLSVSIPFVEVHLSNIHRREPFRHHSYLSDIAEGVICGLGAQGYEFALQYASNYLKKIK.

The active-site Proton acceptor is the tyrosine 26. Substrate-binding residues include asparagine 77, histidine 83, and aspartate 90. Catalysis depends on histidine 103, which acts as the Proton donor. Substrate is bound by residues leucine 104–serine 105 and arginine 114.

This sequence belongs to the type-II 3-dehydroquinase family. In terms of assembly, homododecamer.

The enzyme catalyses 3-dehydroquinate = 3-dehydroshikimate + H2O. The protein operates within metabolic intermediate biosynthesis; chorismate biosynthesis; chorismate from D-erythrose 4-phosphate and phosphoenolpyruvate: step 3/7. Functionally, catalyzes a trans-dehydration via an enolate intermediate. The sequence is that of 3-dehydroquinate dehydratase from Histophilus somni (strain 129Pt) (Haemophilus somnus).